A 182-amino-acid polypeptide reads, in one-letter code: Orotate phosphoribosyltransferase (182 aa).

5-phospho-alpha-D-ribose 1-diphosphate contacts are provided by residues Arg-96, Lys-97, Lys-100, His-102, and 122–130 (EDTSTTGGS). Residues Thr-126 and Arg-154 each coordinate orotate.

It belongs to the purine/pyrimidine phosphoribosyltransferase family. PyrE subfamily. Homodimer. The cofactor is Mg(2+).

It catalyses the reaction orotidine 5'-phosphate + diphosphate = orotate + 5-phospho-alpha-D-ribose 1-diphosphate. It participates in pyrimidine metabolism; UMP biosynthesis via de novo pathway; UMP from orotate: step 1/2. Functionally, catalyzes the transfer of a ribosyl phosphate group from 5-phosphoribose 1-diphosphate to orotate, leading to the formation of orotidine monophosphate (OMP). This is Orotate phosphoribosyltransferase from Streptomyces coelicolor (strain ATCC BAA-471 / A3(2) / M145).